The sequence spans 701 residues: Elongation factor G (701 aa).

In terms of domain architecture, tr-type G spans 8–290 (ERYRNIGISA…AVVDYLPAPT (283 aa)). Residues 17-24 (AHIDAGKT), 88-92 (DTPGH), and 142-145 (NKMD) contribute to the GTP site.

Belongs to the TRAFAC class translation factor GTPase superfamily. Classic translation factor GTPase family. EF-G/EF-2 subfamily.

It is found in the cytoplasm. Catalyzes the GTP-dependent ribosomal translocation step during translation elongation. During this step, the ribosome changes from the pre-translocational (PRE) to the post-translocational (POST) state as the newly formed A-site-bound peptidyl-tRNA and P-site-bound deacylated tRNA move to the P and E sites, respectively. Catalyzes the coordinated movement of the two tRNA molecules, the mRNA and conformational changes in the ribosome. The sequence is that of Elongation factor G from Aeromonas hydrophila subsp. hydrophila (strain ATCC 7966 / DSM 30187 / BCRC 13018 / CCUG 14551 / JCM 1027 / KCTC 2358 / NCIMB 9240 / NCTC 8049).